Reading from the N-terminus, the 467-residue chain is ATP synthase subunit beta (467 aa).

150–157 (GGAGVGKT) lines the ATP pocket.

This sequence belongs to the ATPase alpha/beta chains family. F-type ATPases have 2 components, CF(1) - the catalytic core - and CF(0) - the membrane proton channel. CF(1) has five subunits: alpha(3), beta(3), gamma(1), delta(1), epsilon(1). CF(0) has three main subunits: a(1), b(2) and c(9-12). The alpha and beta chains form an alternating ring which encloses part of the gamma chain. CF(1) is attached to CF(0) by a central stalk formed by the gamma and epsilon chains, while a peripheral stalk is formed by the delta and b chains.

Its subcellular location is the cell inner membrane. It carries out the reaction ATP + H2O + 4 H(+)(in) = ADP + phosphate + 5 H(+)(out). In terms of biological role, produces ATP from ADP in the presence of a proton gradient across the membrane. The catalytic sites are hosted primarily by the beta subunits. This Vibrio cholerae serotype O1 (strain ATCC 39541 / Classical Ogawa 395 / O395) protein is ATP synthase subunit beta.